A 347-amino-acid chain; its full sequence is Ribosomal RNA large subunit methyltransferase M (347 aa).

S-adenosyl-L-methionine is bound by residues serine 184, 217–220 (APGG), aspartate 236, aspartate 256, and aspartate 272. The Proton acceptor role is filled by lysine 301.

This sequence belongs to the class I-like SAM-binding methyltransferase superfamily. RNA methyltransferase RlmE family. RlmM subfamily. As to quaternary structure, monomer.

It localises to the cytoplasm. It carries out the reaction cytidine(2498) in 23S rRNA + S-adenosyl-L-methionine = 2'-O-methylcytidine(2498) in 23S rRNA + S-adenosyl-L-homocysteine + H(+). Functionally, catalyzes the 2'-O-methylation at nucleotide C2498 in 23S rRNA. In Xanthomonas euvesicatoria pv. vesicatoria (strain 85-10) (Xanthomonas campestris pv. vesicatoria), this protein is Ribosomal RNA large subunit methyltransferase M.